A 155-amino-acid polypeptide reads, in one-letter code: Ribosome maturation factor RimP (155 aa).

Belongs to the RimP family.

Its subcellular location is the cytoplasm. In terms of biological role, required for maturation of 30S ribosomal subunits. The polypeptide is Ribosome maturation factor RimP (Maridesulfovibrio salexigens (strain ATCC 14822 / DSM 2638 / NCIMB 8403 / VKM B-1763) (Desulfovibrio salexigens)).